The following is a 324-amino-acid chain: Probable pectinesterase A (324 aa).

Positions 1–19 (MYLPSLVLGLLGFGLTAST) are cleaved as a signal peptide. Asparagine 27 carries N-linked (GlcNAc...) asparagine glycosylation. Glutamine 142 serves as a coordination point for substrate. The active-site Proton donor is aspartate 165. Aspartate 186 serves as the catalytic Nucleophile. Arginine 246 and tryptophan 248 together coordinate substrate.

The protein belongs to the pectinesterase family.

It localises to the secreted. The enzyme catalyses [(1-&gt;4)-alpha-D-galacturonosyl methyl ester](n) + n H2O = [(1-&gt;4)-alpha-D-galacturonosyl](n) + n methanol + n H(+). The protein operates within glycan metabolism; pectin degradation; 2-dehydro-3-deoxy-D-gluconate from pectin: step 1/5. Functionally, involved in maceration and soft-rotting of plant tissue. The chain is Probable pectinesterase A (pmeA) from Aspergillus fumigatus (strain CBS 144.89 / FGSC A1163 / CEA10) (Neosartorya fumigata).